Reading from the N-terminus, the 146-residue chain is Large ribosomal subunit protein uL15 (146 aa).

Residues 1–66 (MKLHELKPAP…LQRRMPKRGF (66 aa)) form a disordered region. Gly residues-rich tracts occupy residues 21–31 (QGIGSGMGKTA) and 42–52 (SGGGVRPGFEG).

Belongs to the universal ribosomal protein uL15 family. Part of the 50S ribosomal subunit.

Its function is as follows. Binds to the 23S rRNA. The protein is Large ribosomal subunit protein uL15 of Pelotomaculum thermopropionicum (strain DSM 13744 / JCM 10971 / SI).